The primary structure comprises 85 residues: Conotoxin Lt28.4 (85 aa).

The signal sequence occupies residues 1–21 (MPKLEMMLLVLLILPLCYIDA). Positions 22-40 (VGPPPPWNMEDEIIEHWQK) are excised as a propeptide.

The protein belongs to the conotoxin D superfamily. Post-translationally, contains 5 disulfide bonds. In terms of tissue distribution, expressed by the venom duct.

It is found in the secreted. In terms of biological role, probable neurotoxin. This chain is Conotoxin Lt28.4, found in Conus litteratus (Lettered cone).